The following is a 465-amino-acid chain: Putative F-box protein At1g21990 (465 aa).

The F-box domain occupies 8 to 54 (RDLISGSPDEILGKILSFLPTHHAATTSVLSKRWRNLLPLVDKLELT).

The polypeptide is Putative F-box protein At1g21990 (Arabidopsis thaliana (Mouse-ear cress)).